A 313-amino-acid polypeptide reads, in one-letter code: Ribosomal RNA small subunit methyltransferase H (313 aa).

Residues 33 to 35 (AGH), aspartate 53, phenylalanine 82, aspartate 103, and glutamine 110 contribute to the S-adenosyl-L-methionine site.

Belongs to the methyltransferase superfamily. RsmH family.

It is found in the cytoplasm. The catalysed reaction is cytidine(1402) in 16S rRNA + S-adenosyl-L-methionine = N(4)-methylcytidine(1402) in 16S rRNA + S-adenosyl-L-homocysteine + H(+). In terms of biological role, specifically methylates the N4 position of cytidine in position 1402 (C1402) of 16S rRNA. This is Ribosomal RNA small subunit methyltransferase H from Acetivibrio thermocellus (strain ATCC 27405 / DSM 1237 / JCM 9322 / NBRC 103400 / NCIMB 10682 / NRRL B-4536 / VPI 7372) (Clostridium thermocellum).